The sequence spans 126 residues: Fluoride-specific ion channel FluC (126 aa).

4 helical membrane-spanning segments follow: residues 3-23 (LSIL…WFLG), 35-55 (LGTL…VAYF), 68-88 (FIIT…AEVV), and 103-123 (IAIH…TVAV). Glycine 75 and serine 78 together coordinate Na(+).

Belongs to the fluoride channel Fluc/FEX (TC 1.A.43) family.

It is found in the cell inner membrane. It catalyses the reaction fluoride(in) = fluoride(out). Its activity is regulated as follows. Na(+) is not transported, but it plays an essential structural role and its presence is essential for fluoride channel function. Fluoride-specific ion channel. Important for reducing fluoride concentration in the cell, thus reducing its toxicity. This Paraburkholderia phymatum (strain DSM 17167 / CIP 108236 / LMG 21445 / STM815) (Burkholderia phymatum) protein is Fluoride-specific ion channel FluC.